Here is a 226-residue protein sequence, read N- to C-terminus: ATP synthase subunit a (226 aa).

A run of 5 helical transmembrane segments spans residues 17–37 (FLFVSHMFLAALLTLIVAKLA), 78–98 (LVATLGLFIFFANLMEIIPGF), 104–124 (NINFTLALALIVFIYYNFEGI), 175–195 (LFVWVLLMLAPWIVPLPGFAL), and 201–221 (FLQTFIFMILTYVYLAGAVLL).

This sequence belongs to the ATPase A chain family. In terms of assembly, F-type ATPases have 2 components, CF(1) - the catalytic core - and CF(0) - the membrane proton channel. CF(1) has five subunits: alpha(3), beta(3), gamma(1), delta(1), epsilon(1). CF(0) has three main subunits: a(1), b(2) and c(9-12). The alpha and beta chains form an alternating ring which encloses part of the gamma chain. CF(1) is attached to CF(0) by a central stalk formed by the gamma and epsilon chains, while a peripheral stalk is formed by the delta and b chains.

It is found in the cell inner membrane. In terms of biological role, key component of the proton channel; it plays a direct role in the translocation of protons across the membrane. This chain is ATP synthase subunit a, found in Nitratiruptor sp. (strain SB155-2).